Consider the following 445-residue polypeptide: Xylose isomerase (445 aa).

Catalysis depends on residues H107 and D110. Mg(2+)-binding residues include E238, E274, H277, D302, D313, D315, and D345.

This sequence belongs to the xylose isomerase family. Homotetramer. The cofactor is Mg(2+).

Its subcellular location is the cytoplasm. It carries out the reaction alpha-D-xylose = alpha-D-xylulofuranose. The chain is Xylose isomerase (xylA) from Priestia megaterium (strain DSM 319 / IMG 1521) (Bacillus megaterium).